Here is a 629-residue protein sequence, read N- to C-terminus: MPELRSRTVTHGRNMAGARALMRASGVPAADIGAKPVVAVANSFTEFVPGHTHLQPVGRIVGDAIRRAGGIPREFNTIAVDDGIAMGHQGMLYSLPSRDLIADSIEYMVQAHCADALVCISNCDKITPGMLLAAMRLDIPTVFVSGGPMEGGRATLADGTVRRLDLITAMSEAVNDATSDADLATIEENACPTCGSCAGMFTANSMNCLVEALGLALPGNGTTLATHTARRDLYEAAGATIMAITRRYYDRDDATVLPRAIASRAAFDNAMALDLAMGGSTNTVLHLLAAAHEAGLDYTLADIEKRSRAVPCLCKVAPNGSHLMEDVHRAGGIPAILGELRRGGHLHTTVRAVHSESLDGWLAEWDVRGPNPAQAAVDLFHAAPGGVRSATAFSQSARWAALDLDAESGCIRDVAHAYSEDGGLAVLRGNLAVDGAVVKSAGVPADLHVFTGEAVVAESQEEAVTAVLSGRVRPGTVLVIRYEGPRGGPGMQEMLYPTAYLKGRGLAGSVAVVTDGRFSGGSSGLSIGHVSPEAAAGGTIAAVTDGDPITIDIPSRTLRLEVDDAEIARRLAHRRRTGYRPRSRHRPLSTALRAYALLAQSADKGGVRRLPPDELGGPEAAFDTQTRAG.

Residue Asp82 coordinates Mg(2+). Cys123 contributes to the [2Fe-2S] cluster binding site. Residues Asp124 and Lys125 each coordinate Mg(2+). At Lys125 the chain carries N6-carboxylysine. A [2Fe-2S] cluster-binding site is contributed by Cys197. Glu493 provides a ligand contact to Mg(2+). Ser519 serves as the catalytic Proton acceptor. The tract at residues 603 to 629 (DKGGVRRLPPDELGGPEAAFDTQTRAG) is disordered.

Belongs to the IlvD/Edd family. Homodimer. [2Fe-2S] cluster is required as a cofactor. Requires Mg(2+) as cofactor.

The enzyme catalyses (2R)-2,3-dihydroxy-3-methylbutanoate = 3-methyl-2-oxobutanoate + H2O. It carries out the reaction (2R,3R)-2,3-dihydroxy-3-methylpentanoate = (S)-3-methyl-2-oxopentanoate + H2O. The protein operates within amino-acid biosynthesis; L-isoleucine biosynthesis; L-isoleucine from 2-oxobutanoate: step 3/4. Its pathway is amino-acid biosynthesis; L-valine biosynthesis; L-valine from pyruvate: step 3/4. Functionally, functions in the biosynthesis of branched-chain amino acids. Catalyzes the dehydration of (2R,3R)-2,3-dihydroxy-3-methylpentanoate (2,3-dihydroxy-3-methylvalerate) into 2-oxo-3-methylpentanoate (2-oxo-3-methylvalerate) and of (2R)-2,3-dihydroxy-3-methylbutanoate (2,3-dihydroxyisovalerate) into 2-oxo-3-methylbutanoate (2-oxoisovalerate), the penultimate precursor to L-isoleucine and L-valine, respectively. In Nocardia farcinica (strain IFM 10152), this protein is Dihydroxy-acid dehydratase 2.